A 211-amino-acid polypeptide reads, in one-letter code: Beta-crystallin B3 (211 aa).

Met1 is modified (N-acetylmethionine). Ala2 is modified (N-acetylalanine; in Beta-crystallin B3, N-terminally processed). Positions 2-23 (AEQHSTPEQAAAGKSHGGLGGS) are N-terminal arm. Beta/gamma crystallin 'Greek key' domains are found at residues 24 to 63 (YKVIVYEMENFQGKRCELTAECPNLTESLLEKVGSIQVES) and 64 to 108 (GPWL…RPLH). Residues 109 to 113 (IDGPD) are connecting peptide. 2 consecutive Beta/gamma crystallin 'Greek key' domains span residues 114–155 (HKLH…RAIN) and 156–198 (GTWV…RRIR). Positions 200 to 211 (QKWHKRGVFLSS) are C-terminal arm.

It belongs to the beta/gamma-crystallin family. In terms of assembly, homo/heterodimer, or complexes of higher-order. The structure of beta-crystallin oligomers seems to be stabilized through interactions between the N-terminal arms.

Crystallins are the dominant structural components of the vertebrate eye lens. This chain is Beta-crystallin B3 (CRYBB3), found in Bos taurus (Bovine).